Here is a 274-residue protein sequence, read N- to C-terminus: 4-deoxy-L-threo-5-hexosulose-uronate ketol-isomerase (274 aa).

Zn(2+)-binding residues include H192, H194, E199, and H241.

This sequence belongs to the KduI family. The cofactor is Zn(2+).

The enzyme catalyses 5-dehydro-4-deoxy-D-glucuronate = 3-deoxy-D-glycero-2,5-hexodiulosonate. The protein operates within glycan metabolism; pectin degradation; 2-dehydro-3-deoxy-D-gluconate from pectin: step 4/5. Functionally, catalyzes the isomerization of 5-dehydro-4-deoxy-D-glucuronate to 3-deoxy-D-glycero-2,5-hexodiulosonate. This is 4-deoxy-L-threo-5-hexosulose-uronate ketol-isomerase from Cereibacter sphaeroides (strain ATCC 17025 / ATH 2.4.3) (Rhodobacter sphaeroides).